Consider the following 403-residue polypeptide: Na(+)-translocating NADH-quinone reductase subunit B (403 aa).

9 helical membrane passes run 56 to 76, 121 to 141, 163 to 183, 220 to 240, 265 to 285, 287 to 307, 312 to 332, 348 to 368, and 371 to 391; these read MMIT…WNTG, AYFL…EVLF, ILPP…GVVI, WTAV…SGGI, TSTL…IASW, IVSG…LIGS, MFAM…GMFF, WIFG…NPAF, and GMML…HFVV. Thr230 carries the post-translational modification FMN phosphoryl threonine.

Belongs to the NqrB/RnfD family. Composed of six subunits; NqrA, NqrB, NqrC, NqrD, NqrE and NqrF. It depends on FMN as a cofactor.

It is found in the cell inner membrane. It carries out the reaction a ubiquinone + n Na(+)(in) + NADH + H(+) = a ubiquinol + n Na(+)(out) + NAD(+). In terms of biological role, NQR complex catalyzes the reduction of ubiquinone-1 to ubiquinol by two successive reactions, coupled with the transport of Na(+) ions from the cytoplasm to the periplasm. NqrA to NqrE are probably involved in the second step, the conversion of ubisemiquinone to ubiquinol. In Ectopseudomonas mendocina (strain ymp) (Pseudomonas mendocina), this protein is Na(+)-translocating NADH-quinone reductase subunit B.